Consider the following 550-residue polypeptide: Iduronate 2-sulfatase (550 aa).

A signal peptide spans 1–25 (MPPPRTGRGLLWLGLVLSSVCVALG). Residues 26–33 (SETQANST) constitute a propeptide that is removed on maturation. Ca(2+)-binding residues include aspartate 45, aspartate 46, and cysteine 84. Cysteine 84 serves as the catalytic Nucleophile. At cysteine 84 the chain carries 3-oxoalanine (Cys). An N-linked (GlcNAc...) asparagine glycan is attached at asparagine 115. Residue histidine 138 is part of the active site. Asparagine 144 is a glycosylation site (N-linked (GlcNAc...) asparagine). A disulfide bridge links cysteine 171 with cysteine 184. N-linked (GlcNAc...) asparagine glycans are attached at residues asparagine 246, asparagine 280, and asparagine 325. Ca(2+)-binding residues include aspartate 334 and histidine 335. Cysteine 422 and cysteine 432 are joined by a disulfide. Asparagine 513 and asparagine 537 each carry an N-linked (GlcNAc...) asparagine glycan.

This sequence belongs to the sulfatase family. As to quaternary structure, monomer. The 58-kDa mature form is composed of two chains resulting from proteolitic processing, the 42-kDa chain and the 14-kDa chain that remain stably associated and form the 58-kDa intermediate form which is enzymatically active. Ca(2+) is required as a cofactor. Synthesized as a 75-kDa precursor form in the endoplasmic reticulum (ER), and then processed by proteolytic cleavage through various intermediates to yield a 55-kDa mature form, with the release of an 18 kDa polypeptide. In terms of processing, the conversion to 3-oxoalanine (also known as C-formylglycine, FGly), of a serine or cysteine residue in prokaryotes and of a cysteine residue in eukaryotes, is critical for catalytic activity. As to expression, liver, kidney, lung, and placenta.

The protein localises to the lysosome. It carries out the reaction Hydrolysis of the 2-sulfate groups of the L-iduronate 2-sulfate units of dermatan sulfate, heparan sulfate and heparin.. In terms of biological role, lysosomal enzyme involved in the degradation pathway of dermatan sulfate and heparan sulfate. This is Iduronate 2-sulfatase (IDS) from Homo sapiens (Human).